Here is a 311-residue protein sequence, read N- to C-terminus: uncharacterized protein (311 aa).

This is an uncharacterized protein from Bacillus subtilis (strain 168).